We begin with the raw amino-acid sequence, 184 residues long: Photosystem I assembly protein Ycf4 (184 aa).

The next 2 membrane-spanning stretches (helical) occupy residues 22–42 (FCWA…GIPS) and 64–84 (IVMC…WCTI).

It belongs to the Ycf4 family.

The protein resides in the plastid. It is found in the chloroplast thylakoid membrane. Its function is as follows. Seems to be required for the assembly of the photosystem I complex. The protein is Photosystem I assembly protein Ycf4 of Huperzia lucidula (Shining clubmoss).